The primary structure comprises 428 residues: Cysteine synthase 2 (428 aa).

A helical transmembrane segment spans residues 7-27; sequence IYIGSAFVAGVVLTIAFKDLF. Position 106 is an N6-(pyridoxal phosphate)lysine (K106). Residues 260–264 and S367 contribute to the pyridoxal 5'-phosphate site; that span reads GTGGT.

This sequence belongs to the cysteine synthase/cystathionine beta-synthase family. The cofactor is pyridoxal 5'-phosphate.

It localises to the mitochondrion outer membrane. The enzyme catalyses O-acetyl-L-serine + hydrogen sulfide = L-cysteine + acetate. Its function is as follows. Putative cysteine synthase that catalyzes the conversion of O-acetyl-L-serine (OAS) into cysteine, the last step in the cysteine biosynthesis pathway. However, in contrast to cysteine synthase cysB, this CS-like protein seems not to function in cysteine biosynthesis. In Emericella nidulans (strain FGSC A4 / ATCC 38163 / CBS 112.46 / NRRL 194 / M139) (Aspergillus nidulans), this protein is Cysteine synthase 2.